The following is a 742-amino-acid chain: Eukaryotic translation initiation factor 3 subunit B (742 aa).

Over residues 1–10 (MAPSFDTLSE) the composition is skewed to polar residues. The segment at 1–20 (MAPSFDTLSEQDLHEEEEEE) is disordered. One can recognise an RRM domain in the interval 40–126 (TFVVIDGLPI…HTLAVNKLMD (87 aa)). WD repeat units lie at residues 193–230 (AHWT…KLKQ), 232–290 (PHPF…RSFV), 304–345 (QPKK…LLGK), 515–558 (IEKK…EKPE), and 573–611 (VEHY…HTFA).

Belongs to the eIF-3 subunit B family. In terms of assembly, component of the eukaryotic translation initiation factor 3 (eIF-3) complex.

It localises to the cytoplasm. In terms of biological role, RNA-binding component of the eukaryotic translation initiation factor 3 (eIF-3) complex, which is involved in protein synthesis of a specialized repertoire of mRNAs and, together with other initiation factors, stimulates binding of mRNA and methionyl-tRNAi to the 40S ribosome. The eIF-3 complex specifically targets and initiates translation of a subset of mRNAs involved in cell proliferation. The chain is Eukaryotic translation initiation factor 3 subunit B (prt1) from Aspergillus terreus (strain NIH 2624 / FGSC A1156).